A 620-amino-acid chain; its full sequence is LEAF RUST 10 DISEASE-RESISTANCE LOCUS RECEPTOR-LIKE PROTEIN KINASE-like 2.3 (620 aa).

Positions 1–30 are cleaved as a signal peptide; the sequence is MDSLSSMGFQTASFFLILLFLFYHLPCVPS. The Extracellular segment spans residues 31 to 256; sequence QQERSRLCKP…NNGTYSDNRP (226 aa). N-linked (GlcNAc...) asparagine glycosylation is found at Asn75, Asn85, Asn93, Asn132, Asn148, Asn162, Asn189, Asn231, and Asn248. Residues 257–277 traverse the membrane as a helical segment; the sequence is FLVTIGTVLGSILCVCVVLFL. At 278-620 the chain is on the cytoplasmic side; the sequence is AFYLNERRIA…SVESSIYSEV (343 aa). One can recognise a Protein kinase domain in the interval 314-596; that stretch reads KSFTEVVGRG…SLDPPPKPLL (283 aa). Residues 320–328 and Lys342 each bind ATP; that span reads VGRGGFGTV. Catalysis depends on Asp431, which acts as the Proton acceptor. Residues 586-620 form a disordered region; the sequence is DSLDPPPKPLLHMPMQNNNAESSQLSVESSIYSEV. Polar residues predominate over residues 600–620; that stretch reads MQNNNAESSQLSVESSIYSEV.

Belongs to the protein kinase superfamily. Ser/Thr protein kinase family.

Its subcellular location is the membrane. It carries out the reaction L-seryl-[protein] + ATP = O-phospho-L-seryl-[protein] + ADP + H(+). It catalyses the reaction L-threonyl-[protein] + ATP = O-phospho-L-threonyl-[protein] + ADP + H(+). The protein is LEAF RUST 10 DISEASE-RESISTANCE LOCUS RECEPTOR-LIKE PROTEIN KINASE-like 2.3 of Arabidopsis thaliana (Mouse-ear cress).